A 161-amino-acid chain; its full sequence is Negative cofactor 2 complex subunit beta (161 aa).

Residues 11–75 (SLPKATVQKM…IAAEHIIKAL (65 aa)) enclose the Histone-fold domain. Residues 93–107 (EHKEQQKNREKKSSK) show a composition bias toward basic and acidic residues. Disordered regions lie at residues 93–116 (EHKEQQKNREKKSSKFEQSGVSRD) and 130–161 (RERFKNQNIAHDNHTTTAIPVPTASETETKEN). A compositionally biased stretch (polar residues) spans 135 to 147 (NQNIAHDNHTTTA).

It belongs to the NC2 beta/DR1 family.

It is found in the cytoplasm. Its subcellular location is the nucleus. In Schizosaccharomyces pombe (strain 972 / ATCC 24843) (Fission yeast), this protein is Negative cofactor 2 complex subunit beta (ncb2).